We begin with the raw amino-acid sequence, 418 residues long: MTDIERDVRKVAERARDAAADLAPLSRDAKDEALTAVADALRERTEEIVAANAKDVAQARENGISEAMIDRLTLTPARITAIADAVHEIVELPDPVGEVVRGKTLPNGLELRQIRVPLGVIGIIYEGRPNVTVDAAALCLKSGNAVLLRGSSSAYSSNTVLTDVIRQALASTRVPVDAVQMVPGKSRESVKHLMRARGLVDVLIPRGGASLIQTVVNESTIPVIETGTGNCHVYVDEAADLDQALKIVLNSKTQRCSVCNASETLLVHAGIADAFLPRALAELREAGVTIHGDERVRSYDSSVVPATEEDWATEYLSLDLAVRVVDSLDEAVAHIRAYSSAHTEAIITDSQAAARRFVSLVDSAAVMVNASTRFTDGGEFGFGAEIGISTQKLHARGPMGLPELTTTKYVVTGEGHVR.

The protein belongs to the gamma-glutamyl phosphate reductase family.

It localises to the cytoplasm. The enzyme catalyses L-glutamate 5-semialdehyde + phosphate + NADP(+) = L-glutamyl 5-phosphate + NADPH + H(+). It participates in amino-acid biosynthesis; L-proline biosynthesis; L-glutamate 5-semialdehyde from L-glutamate: step 2/2. In terms of biological role, catalyzes the NADPH-dependent reduction of L-glutamate 5-phosphate into L-glutamate 5-semialdehyde and phosphate. The product spontaneously undergoes cyclization to form 1-pyrroline-5-carboxylate. The protein is Gamma-glutamyl phosphate reductase of Thermobifida fusca (strain YX).